A 342-amino-acid polypeptide reads, in one-letter code: tRNA N6-adenosine threonylcarbamoyltransferase (342 aa).

The Fe cation site is built by His-111 and His-115. Residues 133–137 (AVSGG), Asp-166, Gly-179, Asp-183, and Asn-272 each bind substrate. Asp-300 lines the Fe cation pocket.

Belongs to the KAE1 / TsaD family. The cofactor is Fe(2+).

The protein resides in the cytoplasm. It carries out the reaction L-threonylcarbamoyladenylate + adenosine(37) in tRNA = N(6)-L-threonylcarbamoyladenosine(37) in tRNA + AMP + H(+). Required for the formation of a threonylcarbamoyl group on adenosine at position 37 (t(6)A37) in tRNAs that read codons beginning with adenine. Is involved in the transfer of the threonylcarbamoyl moiety of threonylcarbamoyl-AMP (TC-AMP) to the N6 group of A37, together with TsaE and TsaB. TsaD likely plays a direct catalytic role in this reaction. The polypeptide is tRNA N6-adenosine threonylcarbamoyltransferase (Geobacter sp. (strain M21)).